The following is a 575-amino-acid chain: MKKTVKILLILITVFLKVHCNGGHDDEAADFLSHTNIDDPNNSSDPNKNSDQGDTMGEDEDRLVIDLFREYNFLIRPVKNVSSPPVVVDFGVAMILLINVDEKNQILQTNVWLTMKWNDFQLAWNPAEYGNISNLHVPSDRVWLPDIVLFNNADGNYEVSFKSNVFVDHHGDVTWVPPAMFKSSCRIDVEWFPFDEQCCTLVFGSWTYNSEEVRLHWYNNIQAVQLHDYSYSGIWDVIDVPGQLVHKPDLKENKMVFNVVIRRKTLFYTVILIIPTVLMAFLSVMAFYLPVDSGEKVSLTISLLLALVVFLLLVSKILPPTSNIPLMGKYLLLAFVLNITAVVGTVVIVNIYFRSALSHKMPTWVRKVFLEFLPHLLVMKRPERIPIFNGYFVEEYCASEIFDASLVMPSMTATMLPFLQVTTNLKAASSTSSGQSSEHHENCSKWKKRLSIRMSKRRAPRARLDDDSEDIIDDTNGNHVDSLQEKISKEMKTTVEAIAYIAEHMKREMSLKKMRDDWKYVAMVLDRLILLIFFGVTLGGTLGIICSAPHVFDFVDQEAIISKLNAKYLPSDMYS.

The first 20 residues, 1-20 (MKKTVKILLILITVFLKVHC), serve as a signal peptide directing secretion. The Extracellular segment spans residues 21-270 (NGGHDDEAAD…IRRKTLFYTV (250 aa)). Positions 31–57 (FLSHTNIDDPNNSSDPNKNSDQGDTMG) are disordered. The segment covering 38 to 50 (DDPNNSSDPNKNS) has biased composition (low complexity). Residues asparagine 41, asparagine 42, asparagine 80, and asparagine 131 are each glycosylated (N-linked (GlcNAc...) asparagine). Cysteine 185 and cysteine 199 are joined by a disulfide. The next 3 helical transmembrane spans lie at 271–291 (ILII…YLPV), 299–319 (LTIS…KILP), and 331–351 (LLLA…IVNI). Topologically, residues 352–527 (YFRSALSHKM…WKYVAMVLDR (176 aa)) are cytoplasmic. Residues 528 to 548 (LILLIFFGVTLGGTLGIICSA) form a helical membrane-spanning segment.

Belongs to the ligand-gated ion channel (TC 1.A.9) family. Acetylcholine receptor (TC 1.A.9.1) subfamily. Component of nicotinic acetylcholine receptor. In cholinergic motoneurons, composed of 2 non-alpha subunits acr-2 and acr-3, and 3 alpha subunits unc-38, unc-63 and acr-12. In terms of tissue distribution, specifically expressed in cholinergic ventral cord motoneurons of the VA, VB, DA and DB classes but not AS and VC classes. Expressed in PVQ and DVC neurons in the tail.

It is found in the postsynaptic cell membrane. It localises to the cell membrane. Its function is as follows. Non-alpha subunit of nicotinic acetylcholine receptor (nAChR). Acts in cholinergic motoneurons to regulate presynaptic neurotransmitter release, thereby ensuring normal level of excitation of cholinergic motoneurons during locomotion. The polypeptide is Acetylcholine receptor subunit beta-type acr-2 (acr-2) (Caenorhabditis elegans).